We begin with the raw amino-acid sequence, 233 residues long: Probable fimbrial chaperone protein ElfD (233 aa).

The N-terminal stretch at 1–26 is a signal peptide; the sequence is MKTCITKGIVTVSLTAILLSCSSAWA.

This sequence belongs to the periplasmic pilus chaperone family.

Its subcellular location is the periplasm. Part of the elfADCG-ycbUVF fimbrial operon, which promotes adhesion of bacteria to different abiotic surfaces. Could be required for the biogenesis of the ElfA fimbriae. The sequence is that of Probable fimbrial chaperone protein ElfD (elfD) from Escherichia coli (strain K12).